The sequence spans 426 residues: Serine--tRNA ligase (426 aa).

235 to 237 (TAE) serves as a coordination point for L-serine. Position 266 to 268 (266 to 268 (RRE)) interacts with ATP. Glutamate 289 serves as a coordination point for L-serine. Residue 353–356 (EISS) participates in ATP binding. Serine 389 is an L-serine binding site.

Belongs to the class-II aminoacyl-tRNA synthetase family. Type-1 seryl-tRNA synthetase subfamily. Homodimer. The tRNA molecule binds across the dimer.

It is found in the cytoplasm. It catalyses the reaction tRNA(Ser) + L-serine + ATP = L-seryl-tRNA(Ser) + AMP + diphosphate + H(+). The enzyme catalyses tRNA(Sec) + L-serine + ATP = L-seryl-tRNA(Sec) + AMP + diphosphate + H(+). Its pathway is aminoacyl-tRNA biosynthesis; selenocysteinyl-tRNA(Sec) biosynthesis; L-seryl-tRNA(Sec) from L-serine and tRNA(Sec): step 1/1. Functionally, catalyzes the attachment of serine to tRNA(Ser). Is also able to aminoacylate tRNA(Sec) with serine, to form the misacylated tRNA L-seryl-tRNA(Sec), which will be further converted into selenocysteinyl-tRNA(Sec). The sequence is that of Serine--tRNA ligase from Nostoc punctiforme (strain ATCC 29133 / PCC 73102).